Consider the following 383-residue polypeptide: Probable endoplasmic reticulum-Golgi intermediate compartment protein 3 (383 aa).

The Cytoplasmic segment spans residues 1-26 (MLISQLKKFDAYPKTVDDFRVKTYTG). A helical membrane pass occupies residues 27–47 (AIVSIIGGVFILWLFFSQVTL). At 48–347 (YFSTDIHHEL…GKSFASFLTN (300 aa)) the chain is on the lumenal side. The helical transmembrane segment at 348-368 (VCAIIGGVFTVFGIFDSFIYY) threads the bilayer. Topologically, residues 369-383 (STKNLQKKIDLGKTF) are cytoplasmic.

This sequence belongs to the ERGIC family.

It is found in the endoplasmic reticulum-Golgi intermediate compartment membrane. Its subcellular location is the golgi apparatus. The protein resides in the cis-Golgi network membrane. The protein localises to the endoplasmic reticulum membrane. Possible role in transport between endoplasmic reticulum and Golgi. The protein is Probable endoplasmic reticulum-Golgi intermediate compartment protein 3 (ergic3) of Dictyostelium discoideum (Social amoeba).